The chain runs to 153 residues: Probable ubiquitin-conjugating enzyme E2 C (153 aa).

A UBC core domain is found at 6–153; that stretch reads SVSKRLQSEL…KRYQEATSRP (148 aa). Cys90 acts as the Glycyl thioester intermediate in catalysis.

It belongs to the ubiquitin-conjugating enzyme family. In terms of assembly, component of the APC/C complex. Autoubiquitinated by the APC/C complex, leading to its degradation by the proteasome.

The catalysed reaction is S-ubiquitinyl-[E1 ubiquitin-activating enzyme]-L-cysteine + [E2 ubiquitin-conjugating enzyme]-L-cysteine = [E1 ubiquitin-activating enzyme]-L-cysteine + S-ubiquitinyl-[E2 ubiquitin-conjugating enzyme]-L-cysteine.. It participates in protein modification; protein ubiquitination. Its function is as follows. Catalyzes the covalent attachment of ubiquitin to other proteins. Acts as an essential factor of the anaphase promoting complex/cyclosome (APC/C), a cell cycle-regulated ubiquitin ligase that controls progression through mitosis. Acts by initiating polyubiquitin chains on APC/C substrates, leading to the degradation of APC/C substrates by the proteasome and promoting mitotic exit. The protein is Probable ubiquitin-conjugating enzyme E2 C (ube2c) of Dictyostelium discoideum (Social amoeba).